The following is a 191-amino-acid chain: uncharacterized protein (191 aa).

The first 23 residues, 1–23 (MKKTMSAITAAAAVTSCFTGFGA), serve as a signal peptide directing secretion.

This is an uncharacterized protein from Bacillus subtilis (strain 168).